A 100-amino-acid chain; its full sequence is Small ribosomal subunit protein uS14c (100 aa).

It belongs to the universal ribosomal protein uS14 family. As to quaternary structure, part of the 30S ribosomal subunit.

The protein resides in the plastid. It localises to the chloroplast. Binds 16S rRNA, required for the assembly of 30S particles. This Carica papaya (Papaya) protein is Small ribosomal subunit protein uS14c.